The sequence spans 184 residues: Large ribosomal subunit protein uL5c (184 aa).

It belongs to the universal ribosomal protein uL5 family. Part of the 50S ribosomal subunit; contacts the 5S rRNA.

Its subcellular location is the plastid. The protein localises to the chloroplast. Functionally, binds 5S rRNA, forms part of the central protuberance of the 50S subunit. The chain is Large ribosomal subunit protein uL5c (rpl5) from Nephroselmis olivacea (Green alga).